Here is a 620-residue protein sequence, read N- to C-terminus: MYND-type zinc finger protein MUB1 (620 aa).

The MYND-type; degenerate zinc finger occupies 514–555 (NFSCGKWEDFPRQFAKCRRCKRTKYCSRKCQLKAWGYHRYWC). Positions 530, 533, 551, and 555 each coordinate Zn(2+). A compositionally biased stretch (polar residues) spans 563-606 (MRSTNTTTGVNTPNEPSSLNATATTAADVSNSTSTFTPNISTTV). The segment at 563–620 (MRSTNTTTGVNTPNEPSSLNATATTAADVSNSTSTFTPNISTTVPDEISNRDENSIPE) is disordered. Positions 610–620 (ISNRDENSIPE) are enriched in basic and acidic residues.

The protein belongs to the MUB1/samB family. In terms of assembly, interacts with UBR2 and RPN4.

The protein localises to the cytoplasm. In terms of biological role, involved in the determination of the onset of polarized growth. Required for the ubiquitin-dependent degradation of RPN4. Cooperates with UBR2 to transfer ubiquitin from RAD6 to RPN4. The polypeptide is MYND-type zinc finger protein MUB1 (MUB1) (Saccharomyces cerevisiae (strain ATCC 204508 / S288c) (Baker's yeast)).